The primary structure comprises 353 residues: Nucleotide-binding protein sce5766 (353 aa).

Residue Gly27–Ser34 participates in ATP binding. Asp76–Val79 serves as a coordination point for GTP. Residues Ser310–Arg353 are disordered. Positions Ser344–Arg353 are enriched in polar residues.

Belongs to the RapZ-like family.

Its function is as follows. Displays ATPase and GTPase activities. This is Nucleotide-binding protein sce5766 from Sorangium cellulosum (strain So ce56) (Polyangium cellulosum (strain So ce56)).